A 328-amino-acid chain; its full sequence is Reticulocalbin-3 (328 aa).

The first 20 residues, 1-20 (MMWRPSVLLLLLLLRHGAQG), serve as a signal peptide directing secretion. The segment at 19-49 (QGKPSPDAGPHGQGRVHQAAPLSDAPHDDAH) is disordered. 6 EF-hand domains span residues 75-112 (ESQARLGRIVDRMDRAGDGDGWVSLAELRAWIAHTQQR), 113-148 (HIRDSVSAAWDTYDTDRDGRVGWEELRNATYGHYAP), 163-198 (KMLARDERRFRVADQDGDSMATREELTAFLHPEEFP), 200-235 (MRDIVIAETLEDLDRNKDGYVQVEEYIADLYSAEPG), 241-276 (WVQTERQQFRDFRDLNKDGHLDGSEVGHWVLPPAQD), and 277-312 (QPLVEANHLLHESDTDKDGRLSKAEILGNWNMFVGS). Residues Asp92, Asp94, Trp96, Glu101, Asp126, Asp128, Asp130, Arg132, and Glu137 each coordinate Ca(2+). Residue Asn140 is glycosylated (N-linked (GlcNAc...) asparagine). The Ca(2+) site is built by Asp176, Asp178, Asp180, Met182, Glu187, Asp213, Asn215, Asp217, Tyr219, Glu224, Asp254, Asn256, Asp258, His260, Glu265, Asp290, Asp292, Asp294, Arg296, and Glu301. Residues 325 to 328 (HDEL) carry the Prevents secretion from ER motif.

This sequence belongs to the CREC family. As to quaternary structure, interacts with PCSK6 (immature form including the propeptide); probably involved in the maturation and the secretion of PCSK6. In terms of processing, degraded by PCSK6 and other endoproteases including FURIN and PCSK5. N-glycosylated. Widely expressed.

The protein localises to the endoplasmic reticulum lumen. Probable molecular chaperone assisting protein biosynthesis and transport in the endoplasmic reticulum. Required for the proper biosynthesis and transport of pulmonary surfactant-associated protein A/SP-A, pulmonary surfactant-associated protein D/SP-D and the lipid transporter ABCA3. By regulating both the proper expression and the degradation through the endoplasmic reticulum-associated protein degradation pathway of these proteins plays a crucial role in pulmonary surfactant homeostasis. Has an anti-fibrotic activity by negatively regulating the secretion of type I and type III collagens. This calcium-binding protein also transiently associates with immature PCSK6 and regulates its secretion. The sequence is that of Reticulocalbin-3 from Homo sapiens (Human).